The following is a 248-amino-acid chain: MRQAIFSNPNDAAEYLANYIIAKINSTPRTFVLGLPTGSSPEGIYAKLIEANKQGRVSFKNVVTFNMDEYLGLAPSDLQSYHYFMYDKFFNHIDIPRENIHILNGLAANIDEECANYEKKIKQYGRIDLFLGGLGPEGHLAFNEAGSSRNSKTRKVELVESTIKANCRFFGNDESKVPKYALSVGISTILDNSDEIAIIVLGKNKQFALDKTVNGKPNDPKYPSSYLQDHANVLIVCDNAAAGLKSKL.

The active-site Proton acceptor; for enolization step is the D68. E137 acts as the For ring-opening step in catalysis. The Proton acceptor; for ring-opening step role is filled by H139. E144 functions as the For ring-opening step in the catalytic mechanism.

Belongs to the glucosamine/galactosamine-6-phosphate isomerase family. Monomer.

It carries out the reaction alpha-D-glucosamine 6-phosphate + H2O = beta-D-fructose 6-phosphate + NH4(+). The sequence is that of Glucosamine-6-phosphate isomerase (NAG1) from Candida albicans (strain SC5314 / ATCC MYA-2876) (Yeast).